The primary structure comprises 82 residues: ATP synthase subunit c, chloroplastic (82 aa).

The next 2 helical transmembrane spans lie at 3 to 23 (PIVA…AAIG) and 57 to 77 (FAFM…LLFA).

It belongs to the ATPase C chain family. In terms of assembly, F-type ATPases have 2 components, F(1) - the catalytic core - and F(0) - the membrane proton channel. F(1) has five subunits: alpha(3), beta(3), gamma(1), delta(1), epsilon(1). F(0) has four main subunits: a(1), b(1), b'(1) and c(10-14). The alpha and beta chains form an alternating ring which encloses part of the gamma chain. F(1) is attached to F(0) by a central stalk formed by the gamma and epsilon chains, while a peripheral stalk is formed by the delta, b and b' chains.

It is found in the plastid. Its subcellular location is the chloroplast thylakoid membrane. Its function is as follows. F(1)F(0) ATP synthase produces ATP from ADP in the presence of a proton or sodium gradient. F-type ATPases consist of two structural domains, F(1) containing the extramembraneous catalytic core and F(0) containing the membrane proton channel, linked together by a central stalk and a peripheral stalk. During catalysis, ATP synthesis in the catalytic domain of F(1) is coupled via a rotary mechanism of the central stalk subunits to proton translocation. Functionally, key component of the F(0) channel; it plays a direct role in translocation across the membrane. A homomeric c-ring of between 10-14 subunits forms the central stalk rotor element with the F(1) delta and epsilon subunits. This Tetradesmus obliquus (Green alga) protein is ATP synthase subunit c, chloroplastic.